The primary structure comprises 572 residues: Probable terpene synthase 11 (572 aa).

Residues aspartate 317, aspartate 321, and glutamate 469 each coordinate Mg(2+). The short motif at 317–321 is the DDXXD motif element; it reads DDIFD.

The protein belongs to the terpene synthase family. Requires Mg(2+) as cofactor.

Its function is as follows. Probable sesquiterpene synthase. This chain is Probable terpene synthase 11 (TPS11), found in Ricinus communis (Castor bean).